Here is a 220-residue protein sequence, read N- to C-terminus: Ribose-5-phosphate isomerase A (220 aa).

Substrate contacts are provided by residues 29 to 32 (TGST), 82 to 85 (DGCD), and 95 to 98 (KGGG). The Proton acceptor role is filled by Glu104. Lys122 lines the substrate pocket.

Belongs to the ribose 5-phosphate isomerase family. In terms of assembly, homodimer.

The enzyme catalyses aldehydo-D-ribose 5-phosphate = D-ribulose 5-phosphate. It participates in carbohydrate degradation; pentose phosphate pathway; D-ribose 5-phosphate from D-ribulose 5-phosphate (non-oxidative stage): step 1/1. Functionally, catalyzes the reversible conversion of ribose-5-phosphate to ribulose 5-phosphate. This chain is Ribose-5-phosphate isomerase A, found in Laribacter hongkongensis (strain HLHK9).